Consider the following 252-residue polypeptide: 5-oxoprolinase subunit A (252 aa).

The protein belongs to the LamB/PxpA family. As to quaternary structure, forms a complex composed of PxpA, PxpB and PxpC.

The enzyme catalyses 5-oxo-L-proline + ATP + 2 H2O = L-glutamate + ADP + phosphate + H(+). Catalyzes the cleavage of 5-oxoproline to form L-glutamate coupled to the hydrolysis of ATP to ADP and inorganic phosphate. The protein is 5-oxoprolinase subunit A of Corynebacterium glutamicum (strain R).